Reading from the N-terminus, the 240-residue chain is Ribosomal RNA small subunit methyltransferase G (240 aa).

Residues glycine 80, phenylalanine 85, aspartate 103–serine 105, alanine 131–glutamate 132, and arginine 150 contribute to the S-adenosyl-L-methionine site.

It belongs to the methyltransferase superfamily. RNA methyltransferase RsmG family.

The protein localises to the cytoplasm. In terms of biological role, specifically methylates the N7 position of a guanine in 16S rRNA. This is Ribosomal RNA small subunit methyltransferase G from Thermoanaerobacter pseudethanolicus (strain ATCC 33223 / 39E) (Clostridium thermohydrosulfuricum).